Reading from the N-terminus, the 62-residue chain is Sperm protamine P1 (62 aa).

The tract at residues 1 to 62 (MARYRHSRSR…RYSRRRRRRY (62 aa)) is disordered.

Belongs to the protamine P1 family. In terms of tissue distribution, testis.

Its subcellular location is the nucleus. The protein localises to the chromosome. Protamines substitute for histones in the chromatin of sperm during the haploid phase of spermatogenesis. They compact sperm DNA into a highly condensed, stable and inactive complex. This Dorcopsulus vanheurni (Lesser forest wallaby) protein is Sperm protamine P1 (PRM1).